The chain runs to 194 residues: Probable nicotinate-nucleotide adenylyltransferase (194 aa).

Belongs to the NadD family.

It catalyses the reaction nicotinate beta-D-ribonucleotide + ATP + H(+) = deamido-NAD(+) + diphosphate. The protein operates within cofactor biosynthesis; NAD(+) biosynthesis; deamido-NAD(+) from nicotinate D-ribonucleotide: step 1/1. In terms of biological role, catalyzes the reversible adenylation of nicotinate mononucleotide (NaMN) to nicotinic acid adenine dinucleotide (NaAD). This chain is Probable nicotinate-nucleotide adenylyltransferase, found in Christiangramia forsetii (strain DSM 17595 / CGMCC 1.15422 / KT0803) (Gramella forsetii).